A 275-amino-acid chain; its full sequence is Formamidopyrimidine-DNA glycosylase (275 aa).

P2 functions as the Schiff-base intermediate with DNA in the catalytic mechanism. Residue E3 is the Proton donor of the active site. The Proton donor; for beta-elimination activity role is filled by K58. Residues H93, R111, and R156 each contribute to the DNA site. Residues 241–275 form an FPG-type zinc finger; the sequence is FVYDRAGLPCRVCGTPIRQIVQGQRSTYFCPTCQR. R265 serves as the catalytic Proton donor; for delta-elimination activity.

The protein belongs to the FPG family. Monomer. The cofactor is Zn(2+).

The catalysed reaction is Hydrolysis of DNA containing ring-opened 7-methylguanine residues, releasing 2,6-diamino-4-hydroxy-5-(N-methyl)formamidopyrimidine.. It carries out the reaction 2'-deoxyribonucleotide-(2'-deoxyribose 5'-phosphate)-2'-deoxyribonucleotide-DNA = a 3'-end 2'-deoxyribonucleotide-(2,3-dehydro-2,3-deoxyribose 5'-phosphate)-DNA + a 5'-end 5'-phospho-2'-deoxyribonucleoside-DNA + H(+). Its function is as follows. Involved in base excision repair of DNA damaged by oxidation or by mutagenic agents. Acts as a DNA glycosylase that recognizes and removes damaged bases. Has a preference for oxidized purines, such as 7,8-dihydro-8-oxoguanine (8-oxoG). Has AP (apurinic/apyrimidinic) lyase activity and introduces nicks in the DNA strand. Cleaves the DNA backbone by beta-delta elimination to generate a single-strand break at the site of the removed base with both 3'- and 5'-phosphates. The chain is Formamidopyrimidine-DNA glycosylase from Burkholderia ambifaria (strain MC40-6).